A 142-amino-acid polypeptide reads, in one-letter code: Glia maturation factor beta (142 aa).

The residue at position 2 (Ser2) is an N-acetylserine. In terms of domain architecture, ADF-H spans 4-139 (SLVVCDVAED…TEEWLREKLG (136 aa)).

Belongs to the actin-binding proteins ADF family. GMF subfamily. Phosphorylated; stimulated by phorbol ester.

Its function is as follows. This protein causes differentiation of brain cells, stimulation of neural regeneration, and inhibition of proliferation of tumor cells. The polypeptide is Glia maturation factor beta (Gmfb) (Mus musculus (Mouse)).